Consider the following 148-residue polypeptide: Translation initiation factor 2 subunit beta (148 aa).

It belongs to the eIF-2-beta/eIF-5 family. As to quaternary structure, heterotrimer composed of an alpha, a beta and a gamma chain.

Functionally, eIF-2 functions in the early steps of protein synthesis by forming a ternary complex with GTP and initiator tRNA. This is Translation initiation factor 2 subunit beta (eif2b) from Aeropyrum pernix (strain ATCC 700893 / DSM 11879 / JCM 9820 / NBRC 100138 / K1).